Here is a 590-residue protein sequence, read N- to C-terminus: Phosphomethylpyrimidine synthase (590 aa).

Residues Asn197, Met226, Tyr255, His291, 311–313 (SRG), 352–355 (DGLR), and Glu391 contribute to the substrate site. His395 is a binding site for Zn(2+). Tyr418 serves as a coordination point for substrate. His459 contacts Zn(2+). [4Fe-4S] cluster contacts are provided by Cys539, Cys542, and Cys547.

It belongs to the ThiC family. Requires [4Fe-4S] cluster as cofactor.

It carries out the reaction 5-amino-1-(5-phospho-beta-D-ribosyl)imidazole + S-adenosyl-L-methionine = 4-amino-2-methyl-5-(phosphooxymethyl)pyrimidine + CO + 5'-deoxyadenosine + formate + L-methionine + 3 H(+). It functions in the pathway cofactor biosynthesis; thiamine diphosphate biosynthesis. Catalyzes the synthesis of the hydroxymethylpyrimidine phosphate (HMP-P) moiety of thiamine from aminoimidazole ribotide (AIR) in a radical S-adenosyl-L-methionine (SAM)-dependent reaction. The sequence is that of Phosphomethylpyrimidine synthase from Bacillus subtilis (strain 168).